The sequence spans 176 residues: ATP synthase subunit b 2 (176 aa).

Residues 29-49 (IFWLVITLVIIYMVLSKVALP) traverse the membrane as a helical segment.

This sequence belongs to the ATPase B chain family. As to quaternary structure, F-type ATPases have 2 components, F(1) - the catalytic core - and F(0) - the membrane proton channel. F(1) has five subunits: alpha(3), beta(3), gamma(1), delta(1), epsilon(1). F(0) has three main subunits: a(1), b(2) and c(10-14). The alpha and beta chains form an alternating ring which encloses part of the gamma chain. F(1) is attached to F(0) by a central stalk formed by the gamma and epsilon chains, while a peripheral stalk is formed by the delta and b chains.

The protein resides in the cell inner membrane. In terms of biological role, f(1)F(0) ATP synthase produces ATP from ADP in the presence of a proton or sodium gradient. F-type ATPases consist of two structural domains, F(1) containing the extramembraneous catalytic core and F(0) containing the membrane proton channel, linked together by a central stalk and a peripheral stalk. During catalysis, ATP synthesis in the catalytic domain of F(1) is coupled via a rotary mechanism of the central stalk subunits to proton translocation. Component of the F(0) channel, it forms part of the peripheral stalk, linking F(1) to F(0). The b'-subunit is a diverged and duplicated form of b found in plants and photosynthetic bacteria. The polypeptide is ATP synthase subunit b 2 (atpF2) (Roseobacter denitrificans (strain ATCC 33942 / OCh 114) (Erythrobacter sp. (strain OCh 114))).